The following is a 170-amino-acid chain: Peptide deformylase (170 aa).

Fe cation contacts are provided by cysteine 91 and histidine 133. Glutamate 134 is a catalytic residue. Residue histidine 137 participates in Fe cation binding.

It belongs to the polypeptide deformylase family. The cofactor is Fe(2+).

The catalysed reaction is N-terminal N-formyl-L-methionyl-[peptide] + H2O = N-terminal L-methionyl-[peptide] + formate. Its function is as follows. Removes the formyl group from the N-terminal Met of newly synthesized proteins. Requires at least a dipeptide for an efficient rate of reaction. N-terminal L-methionine is a prerequisite for activity but the enzyme has broad specificity at other positions. The chain is Peptide deformylase from Yersinia pseudotuberculosis serotype O:1b (strain IP 31758).